Reading from the N-terminus, the 608-residue chain is Bifunctional dihydrofolate reductase-thymidylate synthase (608 aa).

Residues 10–228 (DIYAICACCK…TTLDFIIYKK (219 aa)) form the DHFR domain. 14–15 (IC) provides a ligand contact to substrate. NADP(+) is bound at residue Ala16. A substrate-binding site is contributed by Val31. An NADP(+)-binding site is contributed by 39–45 (GLGNKGV). Substrate-binding residues include Asp54 and Asn108. NADP(+) contacts are provided by residues 106–108 (RTN), 128–130 (SRT), and Asn144. Residues Ile164, Tyr170, and Thr185 each contribute to the substrate site. 165-172 (GGSVVYQE) is an NADP(+) binding site. A thymidylate synthase region spans residues 322 to 608 (YHPEYQYLNI…HEKISMDMAA (287 aa)). Arg345 lines the dUMP pocket. Cys490 is an active-site residue. Residues His491, 509-513 (QRSCD), Asn521, and 551-553 (HVY) contribute to the dUMP site.

It in the N-terminal section; belongs to the dihydrofolate reductase family. In the C-terminal section; belongs to the thymidylate synthase family. Homodimer.

It catalyses the reaction (6S)-5,6,7,8-tetrahydrofolate + NADP(+) = 7,8-dihydrofolate + NADPH + H(+). The catalysed reaction is dUMP + (6R)-5,10-methylene-5,6,7,8-tetrahydrofolate = 7,8-dihydrofolate + dTMP. It participates in cofactor biosynthesis; tetrahydrofolate biosynthesis; 5,6,7,8-tetrahydrofolate from 7,8-dihydrofolate: step 1/1. Bifunctional enzyme. Involved in de novo dTMP biosynthesis. Key enzyme in folate metabolism. Catalyzes an essential reaction for de novo glycine and purine synthesis, DNA precursor synthesis, and for the conversion of dUMP to dTMP. The protein is Bifunctional dihydrofolate reductase-thymidylate synthase of Plasmodium falciparum (isolate K1 / Thailand).